Consider the following 376-residue polypeptide: Queuine tRNA-ribosyltransferase (376 aa).

Residue aspartate 89 is the Proton acceptor of the active site. Residues 89–93 (DSGGF), aspartate 143, glutamine 194, and glycine 221 contribute to the substrate site. The segment at 252-258 (GVGTPSN) is RNA binding. The active-site Nucleophile is aspartate 271. The interval 276 to 280 (ARNGR) is RNA binding; important for wobble base 34 recognition. Zn(2+)-binding residues include cysteine 309, cysteine 311, cysteine 314, and histidine 340.

This sequence belongs to the queuine tRNA-ribosyltransferase family. In terms of assembly, homodimer. Within each dimer, one monomer is responsible for RNA recognition and catalysis, while the other monomer binds to the replacement base PreQ1. Zn(2+) serves as cofactor.

It carries out the reaction 7-aminomethyl-7-carbaguanine + guanosine(34) in tRNA = 7-aminomethyl-7-carbaguanosine(34) in tRNA + guanine. It functions in the pathway tRNA modification; tRNA-queuosine biosynthesis. In terms of biological role, catalyzes the base-exchange of a guanine (G) residue with the queuine precursor 7-aminomethyl-7-deazaguanine (PreQ1) at position 34 (anticodon wobble position) in tRNAs with GU(N) anticodons (tRNA-Asp, -Asn, -His and -Tyr). Catalysis occurs through a double-displacement mechanism. The nucleophile active site attacks the C1' of nucleotide 34 to detach the guanine base from the RNA, forming a covalent enzyme-RNA intermediate. The proton acceptor active site deprotonates the incoming PreQ1, allowing a nucleophilic attack on the C1' of the ribose to form the product. After dissociation, two additional enzymatic reactions on the tRNA convert PreQ1 to queuine (Q), resulting in the hypermodified nucleoside queuosine (7-(((4,5-cis-dihydroxy-2-cyclopenten-1-yl)amino)methyl)-7-deazaguanosine). The chain is Queuine tRNA-ribosyltransferase from Clostridium acetobutylicum (strain ATCC 824 / DSM 792 / JCM 1419 / IAM 19013 / LMG 5710 / NBRC 13948 / NRRL B-527 / VKM B-1787 / 2291 / W).